Here is a 283-residue protein sequence, read N- to C-terminus: uncharacterized protein (283 aa).

Helical transmembrane passes span 8-28 (LILS…IGYV), 38-58 (GIHS…VKIA), 73-93 (FECL…YEIG), 100-120 (IIYG…ILSI), and 175-195 (AIAG…ICLT).

The protein belongs to the cation diffusion facilitator (CDF) transporter (TC 2.A.4) family.

It localises to the cell membrane. This is an uncharacterized protein from Methanocaldococcus jannaschii (strain ATCC 43067 / DSM 2661 / JAL-1 / JCM 10045 / NBRC 100440) (Methanococcus jannaschii).